We begin with the raw amino-acid sequence, 284 residues long: NADH-cytochrome b5 reductase 1 (284 aa).

A helical transmembrane segment spans residues 7–27 (KLVVVIVIVVVPLLFKFIIGP). In terms of domain architecture, FAD-binding FR-type spans 38–142 (NDFQSFPLVE…KGPRGNYHYE (105 aa)). FAD is bound at residue 148–180 (HLGMIAGGTGIAPMYQIMKAIAMDSHDTTKVSL).

The protein belongs to the flavoprotein pyridine nucleotide cytochrome reductase family. In terms of assembly, monomer. Component of the 2-(3-amino-3-carboxypropyl)histidine synthase complex composed of DPH1, DPH2, KTI11/DPH3 and a NADH-dependent reductase, predominantly CBR1. Interacts with KTI11/DPH3. Interacts with STE20. FAD serves as cofactor.

The protein localises to the mitochondrion outer membrane. It catalyses the reaction 2 Fe(III)-[cytochrome b5] + NADH = 2 Fe(II)-[cytochrome b5] + NAD(+) + H(+). It carries out the reaction 2 Fe(3+)-[Dph3] + NADH = 2 Fe(2+)-[Dph3] + NAD(+) + H(+). The protein operates within protein modification; peptidyl-diphthamide biosynthesis. Its activity is regulated as follows. Competitively inhibited by NAD(+). Inhibited by mercurials such as p-chloromercuribenzoate (PCMB) and HgCl(2). Enzymatic activity increases under anaerobic conditions. In terms of biological role, NADH-dependent reductase for KTI11/DPH3 and cytochrome b5. Required for the first step of diphthamide biosynthesis, a post-translational modification of histidine which occurs in elongation factor 2. DPH1 and DPH2 transfer a 3-amino-3-carboxypropyl (ACP) group from S-adenosyl-L-methionine (SAM) to a histidine residue, the reaction is assisted by a reduction system comprising KTI11/DPH3 and a NADH-dependent reductase, predominantly CBR1. By reducing KTI11/DPH3, also involved in the formation of the tRNA wobble base modification mcm5s 2U (5-methoxycarbonylmethyl-2-thiouridine), mediated by the elongator complex. The cytochrome b5/NADH cytochrome b5 reductase electron transfer system supports the catalytic activity of several sterol biosynthetic enzymes. Plays a role in bud morphology. The chain is NADH-cytochrome b5 reductase 1 (CBR1) from Saccharomyces cerevisiae (strain YJM789) (Baker's yeast).